A 161-amino-acid chain; its full sequence is S-ribosylhomocysteine lyase (161 aa).

Residues His-57, His-61, and Cys-127 each coordinate Fe cation.

It belongs to the LuxS family. As to quaternary structure, homodimer. The cofactor is Fe cation.

The catalysed reaction is S-(5-deoxy-D-ribos-5-yl)-L-homocysteine = (S)-4,5-dihydroxypentane-2,3-dione + L-homocysteine. Involved in the synthesis of autoinducer 2 (AI-2) which is secreted by bacteria and is used to communicate both the cell density and the metabolic potential of the environment. The regulation of gene expression in response to changes in cell density is called quorum sensing. Catalyzes the transformation of S-ribosylhomocysteine (RHC) to homocysteine (HC) and 4,5-dihydroxy-2,3-pentadione (DPD). The chain is S-ribosylhomocysteine lyase from Streptococcus equi subsp. zooepidemicus (strain H70).